Consider the following 473-residue polypeptide: Trehalose-6-phosphate synthase (473 aa).

R10 is a D-glucose 6-phosphate binding site. 21-22 (GG) is a UDP-alpha-D-glucose binding site. D-glucose 6-phosphate contacts are provided by Y76 and D130. 2 residues coordinate UDP-alpha-D-glucose: R262 and K267. R300 serves as a coordination point for D-glucose 6-phosphate. Residues F339 and 365 to 369 (LVAKE) contribute to the UDP-alpha-D-glucose site. The disordered stretch occupies residues 454–473 (TPRSPERQQQNNVATFPKLA).

This sequence belongs to the glycosyltransferase 20 family. Homotetramer.

The catalysed reaction is D-glucose 6-phosphate + UDP-alpha-D-glucose = alpha,alpha-trehalose 6-phosphate + UDP + H(+). The protein operates within glycan biosynthesis; trehalose biosynthesis. Functionally, probably involved in the osmoprotection via the biosynthesis of trehalose. Catalyzes the transfer of glucose from UDP-alpha-D-glucose (UDP-Glc) to D-glucose 6-phosphate (Glc-6-P) to form trehalose-6-phosphate. Acts with retention of the anomeric configuration of the UDP-sugar donor. This chain is Trehalose-6-phosphate synthase, found in Salmonella choleraesuis (strain SC-B67).